Reading from the N-terminus, the 66-residue chain is Beta-mammal toxin Cv5 (66 aa).

One can recognise an LCN-type CS-alpha/beta domain in the interval 1–66 (KEGYIVNYYD…VWPLPKKKCN (66 aa)). Intrachain disulfides connect cysteine 12/cysteine 65, cysteine 16/cysteine 41, cysteine 25/cysteine 46, and cysteine 29/cysteine 48.

In terms of tissue distribution, expressed by the venom gland.

The protein resides in the secreted. Its activity is regulated as follows. Is susceptible to be neutralized by human antibodies scFvs 10FG2 and HV. Beta toxins bind voltage-independently at site-4 of sodium channels (Nav) and reduces peak current and shifts the voltage of activation toward more negative potentials thereby affecting sodium channel activation and promoting spontaneous and repetitive firing. This toxin is moderately toxic to mice. This chain is Beta-mammal toxin Cv5, found in Centruroides villegasi (Scorpion).